The sequence spans 263 residues: Palmitoyltransferase ZDHHC22 (263 aa).

Topologically, residues 1 to 9 (MLALRLLNV) are cytoplasmic. The chain crosses the membrane as a helical span at residues 10–30 (VAPAYFLCISLVTFVLQLFLF). The Lumenal segment spans residues 31–48 (LPSMREDPTATPLFSPAV). Residues 49–69 (LHGALFLFLSANALGNYVLVI) form a helical membrane-spanning segment. Over 70–125 (QNSPDDLGTCQGTMSQRPQCPPPSTHFCRVCSRVTLRHDHHCFFTGNCIGSRNMRN) the chain is Cytoplasmic. The region spanning 91-131 (PPSTHFCRVCSRVTLRHDHHCFFTGNCIGSRNMRNFILFCL) is the DHHC domain. The active-site S-palmitoyl cysteine intermediate is the C111. 2 consecutive transmembrane segments (helical) span residues 126–146 (FILF…AGVA) and 147–167 (YISA…TLLP). Residues 168 to 182 (TSISQFFSGAVLGSD) are Cytoplasmic-facing. A helical transmembrane segment spans residues 183 to 203 (MFVILMLYLWFAVGLACAGFC). Residues 204–263 (CHQLLLILRGQTRYQVRKGMAVRARPWRKNLQEVFGKRWLLGLLVPMFNVGTESSKQQDK) are Lumenal-facing.

The protein belongs to the DHHC palmitoyltransferase family. In terms of assembly, interacts with CNN3.

Its subcellular location is the endoplasmic reticulum membrane. It is found in the golgi apparatus membrane. It carries out the reaction L-cysteinyl-[protein] + hexadecanoyl-CoA = S-hexadecanoyl-L-cysteinyl-[protein] + CoA. Its function is as follows. Palmitoyltransferase that could catalyze the addition of palmitate onto various protein substrates and be involved in a variety of cellular processes. Catalyzes the palmitoylation of KCNMA1, regulating localization of KCNMA1 to the plasma membrane. Might also mediate palmitoylation of CNN3. This chain is Palmitoyltransferase ZDHHC22, found in Mus musculus (Mouse).